Consider the following 322-residue polypeptide: Mitochondrial thiamine pyrophosphate carrier 1 (322 aa).

Solcar repeat units lie at residues Gly12–Ala111, Pro122–Pro208, and Pro215–Leu310. 6 helical membrane passes run Met18–Val38, Leu92–Val108, Phe128–Leu148, Phe180–Ala200, Ala221–Ile241, and Gly285–Trp302.

Belongs to the mitochondrial carrier (TC 2.A.29) family.

It localises to the mitochondrion inner membrane. In terms of biological role, mitochondrial transporter that mediates uptake of thiamine pyrophosphate (ThPP) into mitochondria. This chain is Mitochondrial thiamine pyrophosphate carrier 1 (tpc1), found in Sclerotinia sclerotiorum (strain ATCC 18683 / 1980 / Ss-1) (White mold).